The sequence spans 143 residues: Large ribosomal subunit protein uL16 (143 aa).

Residues 1-17 (MLQPKKTKFRRSQKGRM) show a composition bias toward basic residues. The segment at 1–25 (MLQPKKTKFRRSQKGRMKGNAQRGN) is disordered.

This sequence belongs to the universal ribosomal protein uL16 family. In terms of assembly, part of the 50S ribosomal subunit.

Binds 23S rRNA and is also seen to make contacts with the A and possibly P site tRNAs. This Azobacteroides pseudotrichonymphae genomovar. CFP2 protein is Large ribosomal subunit protein uL16.